Reading from the N-terminus, the 317-residue chain is Metaxin-1 (317 aa).

Glycyl lysine isopeptide (Lys-Gly) (interchain with G-Cter in ubiquitin) cross-links involve residues Lys38, Lys41, and Lys78. The chain crosses the membrane as a helical span at residues 164–184 (EELEKELYQEARECLTLLSQR).

This sequence belongs to the metaxin family. In terms of assembly, interacts with MTX2/metaxin-2. Associates with the mitochondrial contact site and cristae organizing system (MICOS) complex, composed of at least MICOS10/MIC10, CHCHD3/MIC19, CHCHD6/MIC25, APOOL/MIC27, IMMT/MIC60, APOO/MIC23/MIC26 and QIL1/MIC13. This complex was also known under the names MINOS or MitOS complex. The MICOS complex associates with mitochondrial outer membrane proteins SAMM50, MTX1 and MTX2 (together described as components of the mitochondrial outer membrane sorting assembly machinery (SAM) complex) and DNAJC11, mitochondrial inner membrane protein TMEM11 and with HSPA9. The MICOS and SAM complexes together with DNAJC11 are part of a large protein complex spanning both membranes termed the mitochondrial intermembrane space bridging (MIB) complex. Interacts with ARMC1. In terms of processing, ubiquitinated by PRKN during mitophagy, leading to its degradation and enhancement of mitophagy. Deubiquitinated by USP30.

The protein localises to the mitochondrion outer membrane. Involved in transport of proteins into the mitochondrion. Essential for embryonic development. The protein is Metaxin-1 (MTX1) of Sus scrofa (Pig).